The primary structure comprises 165 residues: Cysteine-rich hydrophobic domain-containing protein 2 (165 aa).

Residues 1–26 (MADFDEIYEEEEDEERALEEQLLKYS) are a coiled coil. The short motif at 88–106 (CGCLCCCCTLGCSMWPVIC) is the CHIC motif (Cys-rich) element.

This sequence belongs to the CHIC family. Post-translationally, palmitoylation in the CHIC motif is required for membrane association.

It localises to the membrane. It is found in the golgi apparatus. The protein is Cysteine-rich hydrophobic domain-containing protein 2 (Chic2) of Mus musculus (Mouse).